The sequence spans 467 residues: tRNA(Ile)-lysidine synthase (467 aa).

26-31 (SGGPDS) lines the ATP pocket.

It belongs to the tRNA(Ile)-lysidine synthase family.

It is found in the cytoplasm. It catalyses the reaction cytidine(34) in tRNA(Ile2) + L-lysine + ATP = lysidine(34) in tRNA(Ile2) + AMP + diphosphate + H(+). In terms of biological role, ligates lysine onto the cytidine present at position 34 of the AUA codon-specific tRNA(Ile) that contains the anticodon CAU, in an ATP-dependent manner. Cytidine is converted to lysidine, thus changing the amino acid specificity of the tRNA from methionine to isoleucine. This is tRNA(Ile)-lysidine synthase from Clostridium tetani (strain Massachusetts / E88).